The primary structure comprises 811 residues: tRNA(Met) cytidine acetyltransferase TmcA (811 aa).

Residues Q267 and R439 each contribute to the ATP site. The region spanning 473-662 is the N-acetyltransferase domain; sequence KKEVYLEEPD…GEFTAIVLKP (190 aa). Residues 589–591, E629, and R636 each bind acetyl-CoA; that span reads IAT.

It belongs to the TmcA family.

It is found in the cytoplasm. It catalyses the reaction cytidine(34) in elongator tRNA(Met) + acetyl-CoA + ATP + H2O = N(4)-acetylcytidine(34) in elongator tRNA(Met) + ADP + phosphate + CoA + H(+). The catalysed reaction is a cytidine in RNA + acetyl-CoA + ATP + H2O = an N(4)-acetylcytidine in RNA + ADP + phosphate + CoA + H(+). It carries out the reaction a cytidine in tRNA + acetyl-CoA + ATP + H2O = an N(4)-acetylcytidine in tRNA + ADP + phosphate + CoA + H(+). The enzyme catalyses a cytidine in mRNA + acetyl-CoA + ATP + H2O = an N(4)-acetylcytidine in mRNA + ADP + phosphate + CoA + H(+). Catalyzes the formation of N(4)-acetylcytidine (ac(4)C) at the wobble position of tRNA(Met), by using acetyl-CoA as an acetyl donor and ATP (or GTP). Its function is as follows. Catalyzes the formation of 267 N(4)-acetylcytidine (ac(4)C) sites in RNA, almost always on the middle C of a CCG motif. Modifications are found in rRNA, ncRNA, mRNA and tRNA. More acetylation is observed at 95 than at 75 or 85 degrees Celsius. The polypeptide is tRNA(Met) cytidine acetyltransferase TmcA (Thermococcus sp. (strain AM4)).